Consider the following 445-residue polypeptide: Allantoinase (445 aa).

6 residues coordinate Zn(2+): His-63, His-65, Lys-150, His-186, His-238, and Asp-311. Lys-150 is subject to N6-carboxylysine.

The protein belongs to the metallo-dependent hydrolases superfamily. Allantoinase family. Homotetramer. Zn(2+) is required as a cofactor. Post-translationally, carboxylation allows a single lysine to coordinate two zinc ions.

The enzyme catalyses (S)-allantoin + H2O = allantoate + H(+). The protein operates within nitrogen metabolism; (S)-allantoin degradation; allantoate from (S)-allantoin: step 1/1. Its function is as follows. Catalyzes the conversion of allantoin (5-ureidohydantoin) to allantoic acid by hydrolytic cleavage of the five-member hydantoin ring. This chain is Allantoinase, found in Streptomyces avermitilis (strain ATCC 31267 / DSM 46492 / JCM 5070 / NBRC 14893 / NCIMB 12804 / NRRL 8165 / MA-4680).